The primary structure comprises 129 residues: Phosphoribosyl-AMP cyclohydrolase (129 aa).

Residue D77 coordinates Mg(2+). C78 provides a ligand contact to Zn(2+). Positions 79 and 81 each coordinate Mg(2+). Zn(2+) contacts are provided by C94 and C101.

It belongs to the PRA-CH family. Homodimer. It depends on Mg(2+) as a cofactor. Requires Zn(2+) as cofactor.

The protein resides in the cytoplasm. It catalyses the reaction 1-(5-phospho-beta-D-ribosyl)-5'-AMP + H2O = 1-(5-phospho-beta-D-ribosyl)-5-[(5-phospho-beta-D-ribosylamino)methylideneamino]imidazole-4-carboxamide. It functions in the pathway amino-acid biosynthesis; L-histidine biosynthesis; L-histidine from 5-phospho-alpha-D-ribose 1-diphosphate: step 3/9. Functionally, catalyzes the hydrolysis of the adenine ring of phosphoribosyl-AMP. The chain is Phosphoribosyl-AMP cyclohydrolase from Methanosphaera stadtmanae (strain ATCC 43021 / DSM 3091 / JCM 11832 / MCB-3).